A 98-amino-acid polypeptide reads, in one-letter code: Beta-elicitin MGM-beta (98 aa).

Cystine bridges form between cysteine 3–cysteine 71, cysteine 27–cysteine 56, and cysteine 51–cysteine 95.

Belongs to the elicitin family.

The protein resides in the secreted. Its function is as follows. Induces local and distal defense responses (incompatible hypersensitive reaction) in plants from the solanaceae and cruciferae families. Elicits leaf necrosis and causes the accumulation of pathogenesis-related proteins. Might interact with the lipidic molecules of the plasma membrane. The protein is Beta-elicitin MGM-beta of Phytophthora megasperma (Potato pink rot fungus).